The sequence spans 142 residues: Hemoglobin subunit alpha (142 aa).

Serine 1 carries the post-translational modification N-acetylserine. The Globin domain maps to 1-142 (SLSDKDKAVV…LALALSEKYR (142 aa)). Histidine 59 lines the O2 pocket. Residue histidine 88 participates in heme b binding.

Belongs to the globin family. As to quaternary structure, heterotetramer of two alpha chains and two beta chains. In terms of tissue distribution, red blood cells.

Involved in oxygen transport from gills to the various peripheral tissues. The chain is Hemoglobin subunit alpha (hba) from Carassius auratus (Goldfish).